The primary structure comprises 126 residues: Holo-[acyl-carrier-protein] synthase (126 aa).

The Mg(2+) site is built by Asp9 and Glu58.

Belongs to the P-Pant transferase superfamily. AcpS family. The cofactor is Mg(2+).

It is found in the cytoplasm. It catalyses the reaction apo-[ACP] + CoA = holo-[ACP] + adenosine 3',5'-bisphosphate + H(+). In terms of biological role, transfers the 4'-phosphopantetheine moiety from coenzyme A to a Ser of acyl-carrier-protein. The chain is Holo-[acyl-carrier-protein] synthase from Shewanella denitrificans (strain OS217 / ATCC BAA-1090 / DSM 15013).